Reading from the N-terminus, the 220-residue chain is N-(5'-phosphoribosyl)anthranilate isomerase (220 aa).

Belongs to the TrpF family.

The catalysed reaction is N-(5-phospho-beta-D-ribosyl)anthranilate = 1-(2-carboxyphenylamino)-1-deoxy-D-ribulose 5-phosphate. The protein operates within amino-acid biosynthesis; L-tryptophan biosynthesis; L-tryptophan from chorismate: step 3/5. The protein is N-(5'-phosphoribosyl)anthranilate isomerase of Xylella fastidiosa (strain M12).